A 402-amino-acid polypeptide reads, in one-letter code: Putative F-box protein At3g20030 (402 aa).

The F-box domain maps to 1–56; it reads MTMMSDLSQDLLEEILSRVPRTSLGAVRSTCKRWNTLFKDRILCKAEETRDQFRFI.

The chain is Putative F-box protein At3g20030 from Arabidopsis thaliana (Mouse-ear cress).